Consider the following 501-residue polypeptide: Serine/threonine protein phosphatase 2A 55 kDa regulatory subunit B beta isoform (501 aa).

Residue Met-1 is modified to N-acetylmethionine. WD repeat units follow at residues 34 to 73 (QEVD…DHGG), 110 to 151 (EIEE…IKKI), 220 to 258 (AHDY…QSFN), 269 to 309 (DLTE…LCDS), and 328 to 366 (EIIA…GPVA). Over residues 439–449 (TPARPSRSIGS) the composition is skewed to polar residues. The interval 439 to 466 (TPARPSRSIGSMTRVVRRGSESPGTEAN) is disordered. The stretch at 471–501 (DFTTKLLHMAWHPTENSIACAAANSLYMYYA) is one WD 6 repeat.

This sequence belongs to the phosphatase 2A regulatory subunit B family. PP2A consists of a common heteromeric enzyme, composed of a catalytic subunit (subunits C), a constant regulatory subunit (subunit A), and a variety of regulatory subunits such as subunits B (the R2/B/PR55/B55, R3/B''/PR72/PR130/PR59 and R5/B'/B56 families). Interacts with SIC/RON3. In terms of tissue distribution, expressed ubiquitously.

Its function is as follows. The B regulatory subunit may modulate substrate selectivity and catalytic activity, and may also direct the localization of the catalytic enzyme to a particular subcellular compartment. This chain is Serine/threonine protein phosphatase 2A 55 kDa regulatory subunit B beta isoform (PP2AB2), found in Arabidopsis thaliana (Mouse-ear cress).